We begin with the raw amino-acid sequence, 249 residues long: 1-(5-phosphoribosyl)-5-[(5-phosphoribosylamino)methylideneamino] imidazole-4-carboxamide isomerase (249 aa).

Asp8 (proton acceptor) is an active-site residue. Residue Asp129 is the Proton donor of the active site.

It belongs to the HisA/HisF family.

The protein localises to the cytoplasm. The catalysed reaction is 1-(5-phospho-beta-D-ribosyl)-5-[(5-phospho-beta-D-ribosylamino)methylideneamino]imidazole-4-carboxamide = 5-[(5-phospho-1-deoxy-D-ribulos-1-ylimino)methylamino]-1-(5-phospho-beta-D-ribosyl)imidazole-4-carboxamide. The protein operates within amino-acid biosynthesis; L-histidine biosynthesis; L-histidine from 5-phospho-alpha-D-ribose 1-diphosphate: step 4/9. This chain is 1-(5-phosphoribosyl)-5-[(5-phosphoribosylamino)methylideneamino] imidazole-4-carboxamide isomerase, found in Nitratidesulfovibrio vulgaris (strain ATCC 29579 / DSM 644 / CCUG 34227 / NCIMB 8303 / VKM B-1760 / Hildenborough) (Desulfovibrio vulgaris).